The sequence spans 465 residues: Sensor histidine kinase ZraS (465 aa).

Residues 1-14 (MSFIRLHKDAAATW) lie on the Cytoplasmic side of the membrane. A helical transmembrane segment spans residues 15-35 (LSRLLPAAIFILVGLFSIMVI). At 36–202 (RDYGRESAAA…AATQAREWRN (167 aa)) the chain is on the periplasmic side. Residues 203 to 223 (TLIVLSALAAVLLATLLAFFW) traverse the membrane as a helical segment. At 224–465 (HQRYQRSHRE…WLPVIARQQD (242 aa)) the chain is on the cytoplasmic side. Positions 253-461 (GVAHEIRNPL…VFTIWLPVIA (209 aa)) constitute a Histidine kinase domain. Phosphohistidine; by autocatalysis is present on histidine 256.

Autophosphorylated.

The protein localises to the cell inner membrane. The enzyme catalyses ATP + protein L-histidine = ADP + protein N-phospho-L-histidine.. Its activity is regulated as follows. Activity of the ZraS/ZraR two-component system is repressed by the zinc-bound form of ZraP, which probably interacts with the periplasmic region of ZraS. Its function is as follows. Part of the Zra signaling pathway, an envelope stress response (ESR) system composed of the periplasmic accessory protein ZraP, the histidine kinase ZraS and the transcriptional regulator ZraR. The ZraPSR system contributes to antibiotic resistance and is important for membrane integrity in the presence of membrane-targeting biocides. ZraS is a member of the two-component regulatory system ZraS/ZraR. Functions as a membrane-associated sensor kinase that phosphorylates ZraR in response to high concentrations of Zn(2+) or Pb(2+) in the medium. In Salmonella typhimurium (strain LT2 / SGSC1412 / ATCC 700720), this protein is Sensor histidine kinase ZraS.